The following is a 352-amino-acid chain: Ribosomal RNA large subunit methyltransferase M (352 aa).

S-adenosyl-L-methionine is bound by residues S184, 217–220, D236, D256, and D272; that span reads APGG. Residue K301 is the Proton acceptor of the active site.

This sequence belongs to the class I-like SAM-binding methyltransferase superfamily. RNA methyltransferase RlmE family. RlmM subfamily. Monomer.

The protein localises to the cytoplasm. It carries out the reaction cytidine(2498) in 23S rRNA + S-adenosyl-L-methionine = 2'-O-methylcytidine(2498) in 23S rRNA + S-adenosyl-L-homocysteine + H(+). Catalyzes the 2'-O-methylation at nucleotide C2498 in 23S rRNA. This Pseudomonas aeruginosa (strain UCBPP-PA14) protein is Ribosomal RNA large subunit methyltransferase M.